The primary structure comprises 302 residues: Acetylglutamate kinase (302 aa).

Substrate contacts are provided by residues 75–76 (GG), Arg-97, and Asn-198.

This sequence belongs to the acetylglutamate kinase family. ArgB subfamily.

The protein localises to the cytoplasm. The catalysed reaction is N-acetyl-L-glutamate + ATP = N-acetyl-L-glutamyl 5-phosphate + ADP. The protein operates within amino-acid biosynthesis; L-arginine biosynthesis; N(2)-acetyl-L-ornithine from L-glutamate: step 2/4. Catalyzes the ATP-dependent phosphorylation of N-acetyl-L-glutamate. In Leifsonia xyli subsp. xyli (strain CTCB07), this protein is Acetylglutamate kinase.